A 946-amino-acid polypeptide reads, in one-letter code: Bifunctional glutamine synthetase adenylyltransferase/adenylyl-removing enzyme (946 aa).

Positions 1–440 (MKPLSSPLQQ…VFNELIGDDE (440 aa)) are adenylyl removase. Residues 449–946 (SEQWRELWQD…VSWQKWLVEE (498 aa)) form an adenylyl transferase region.

This sequence belongs to the GlnE family. Mg(2+) is required as a cofactor.

It carries out the reaction [glutamine synthetase]-O(4)-(5'-adenylyl)-L-tyrosine + phosphate = [glutamine synthetase]-L-tyrosine + ADP. It catalyses the reaction [glutamine synthetase]-L-tyrosine + ATP = [glutamine synthetase]-O(4)-(5'-adenylyl)-L-tyrosine + diphosphate. Its function is as follows. Involved in the regulation of glutamine synthetase GlnA, a key enzyme in the process to assimilate ammonia. When cellular nitrogen levels are high, the C-terminal adenylyl transferase (AT) inactivates GlnA by covalent transfer of an adenylyl group from ATP to specific tyrosine residue of GlnA, thus reducing its activity. Conversely, when nitrogen levels are low, the N-terminal adenylyl removase (AR) activates GlnA by removing the adenylyl group by phosphorolysis, increasing its activity. The regulatory region of GlnE binds the signal transduction protein PII (GlnB) which indicates the nitrogen status of the cell. The chain is Bifunctional glutamine synthetase adenylyltransferase/adenylyl-removing enzyme from Escherichia coli (strain SMS-3-5 / SECEC).